A 310-amino-acid chain; its full sequence is MILTLTLNPSVDISYPLTALKLDDVNRVQEVSKTAGGKGLNVTRVLAQVGEPVLASGFIGGELGQFIAKKLDHAGIKHAFYNIKGETRNCIAILHEGQQTEILEQGPEIDNQEAAGFIKHFEQLLEKVEAVAISGSLPKGLNQDYYAQIIERCQNKGVPVILDCSGATLQTVLENPYKPTVIKPNISELYQLLNQPLDESLESLKQAVSQPLFEGIEWIIVSLGAQGAFAKHNHTFYRVNIPKISVLNPVGSGDSTVAGITSAILNHENDHDLLKKANTLGMLNAQEAQTGYVNLNNYDDLFNQIEVLEV.

This sequence belongs to the carbohydrate kinase PfkB family. LacC subfamily.

The catalysed reaction is D-tagatofuranose 6-phosphate + ATP = D-tagatofuranose 1,6-bisphosphate + ADP + H(+). Its pathway is carbohydrate metabolism; D-tagatose 6-phosphate degradation; D-glyceraldehyde 3-phosphate and glycerone phosphate from D-tagatose 6-phosphate: step 1/2. The sequence is that of Tagatose-6-phosphate kinase from Staphylococcus aureus (strain MRSA252).